Here is a 443-residue protein sequence, read N- to C-terminus: Trigger factor (443 aa).

Residues 165-250 (GDQIVMDFLG…VKEVKKPVPA (86 aa)) enclose the PPIase FKBP-type domain.

The protein belongs to the FKBP-type PPIase family. Tig subfamily.

It is found in the cytoplasm. The catalysed reaction is [protein]-peptidylproline (omega=180) = [protein]-peptidylproline (omega=0). Its function is as follows. Involved in protein export. Acts as a chaperone by maintaining the newly synthesized protein in an open conformation. Functions as a peptidyl-prolyl cis-trans isomerase. This chain is Trigger factor, found in Roseobacter denitrificans (strain ATCC 33942 / OCh 114) (Erythrobacter sp. (strain OCh 114)).